The chain runs to 566 residues: E3 ubiquitin-protein ligase Rnf220 (566 aa).

Lysine 277 is covalently cross-linked (Glycyl lysine isopeptide (Lys-Gly) (interchain with G-Cter in SUMO2)). Positions 277–300 (KREGDSPTASPHSSATEDLHHSDR) are disordered. Basic and acidic residues predominate over residues 291–300 (ATEDLHHSDR). The residue at position 390 (serine 390) is a Phosphoserine. Positions 485–513 (EESAVTTFEALKARVRELERQLSRGDRYK) form a coiled coil. The required for targeting to the cytoplasm stretch occupies residues 514 to 522 (CLICMDSYS). The RING-type zinc finger occupies 514-553 (CLICMDSYSMPLTSIQCWHVHCEECWLRTLGAKKLCPQCN).

Interacts with SIN3B. Interacts with CTNNB1 (via Armadillo repeats 2-8). Interacts with USP7 (via MATH domain). In terms of processing, auto-ubiquitinated; leads to proteasomal degradation. In the brain, expressed in the hippocampus, telenecephalon and cerebellum. No expression in astro glial cells or in neural progenitor cells.

Its subcellular location is the cytoplasm. It is found in the nucleus. The catalysed reaction is S-ubiquitinyl-[E2 ubiquitin-conjugating enzyme]-L-cysteine + [acceptor protein]-L-lysine = [E2 ubiquitin-conjugating enzyme]-L-cysteine + N(6)-ubiquitinyl-[acceptor protein]-L-lysine.. The protein operates within protein modification; protein ubiquitination. E3 ubiquitin-protein ligase that promotes the ubiquitination and proteasomal degradation of SIN3B. Independently of its E3 ligase activity, acts as a CTNNB1 stabilizer through USP7-mediated deubiquitination of CTNNB1 and promotes Wnt signaling. Plays a critical role in the regulation of nuclear lamina. The chain is E3 ubiquitin-protein ligase Rnf220 (Rnf220) from Mus musculus (Mouse).